The sequence spans 247 residues: 3,4-dihydroxy-2-butanone 4-phosphate synthase (247 aa).

D-ribulose 5-phosphate contacts are provided by residues 38–39, Asp-43, 179–183, and Glu-203; these read RE and RMGQT. Position 39 (Glu-39) interacts with Mg(2+).

Belongs to the DHBP synthase family. As to quaternary structure, homodimer. Mg(2+) is required as a cofactor. Requires Mn(2+) as cofactor.

The catalysed reaction is D-ribulose 5-phosphate = (2S)-2-hydroxy-3-oxobutyl phosphate + formate + H(+). The protein operates within cofactor biosynthesis; riboflavin biosynthesis; 2-hydroxy-3-oxobutyl phosphate from D-ribulose 5-phosphate: step 1/1. Catalyzes the conversion of D-ribulose 5-phosphate to formate and 3,4-dihydroxy-2-butanone 4-phosphate. This is 3,4-dihydroxy-2-butanone 4-phosphate synthase from Methanosarcina mazei (strain ATCC BAA-159 / DSM 3647 / Goe1 / Go1 / JCM 11833 / OCM 88) (Methanosarcina frisia).